Consider the following 319-residue polypeptide: FAD-dependent oxidoreductase FVFD30 (319 aa).

3 residues coordinate FAD: R6, D18, and K25. K129 and G188 together coordinate NAD(+). The NADP(+) site is built by K129 and G188. Positions 228 and 265 each coordinate FAD. 6-hydroxy-FAD is bound at residue D228. Y265 provides a ligand contact to NAD(+). Position 265 (Y265) interacts with NADP(+). The helical transmembrane segment at 281–301 threads the bilayer; that stretch reads GVGYFGVWWGIVIGGWLASLL.

This sequence belongs to the FAD-dependent oxidoreductase family.

It is found in the membrane. In terms of biological role, probable FAD-dependent oxidoreductase that plays a role in the regulation of fruiting body development. The polypeptide is FAD-dependent oxidoreductase FVFD30 (Flammulina velutipes (Agaricus velutipes)).